The primary structure comprises 92 residues: Small ribosomal subunit protein uS19 (92 aa).

The protein belongs to the universal ribosomal protein uS19 family.

In terms of biological role, protein S19 forms a complex with S13 that binds strongly to the 16S ribosomal RNA. The protein is Small ribosomal subunit protein uS19 of Lachnoclostridium phytofermentans (strain ATCC 700394 / DSM 18823 / ISDg) (Clostridium phytofermentans).